The primary structure comprises 277 residues: Undecaprenyl-diphosphatase (277 aa).

6 helical membrane passes run 88–108 (MGWL…LFQD), 117–137 (MWIV…ADAV), 157–179 (FAQA…AGLL), 191–211 (SFLL…YKVV), 227–247 (LATV…LKFV), and 255–275 (FVWY…FGVI).

The protein belongs to the UppP family.

It localises to the cell membrane. The catalysed reaction is di-trans,octa-cis-undecaprenyl diphosphate + H2O = di-trans,octa-cis-undecaprenyl phosphate + phosphate + H(+). In terms of biological role, catalyzes the dephosphorylation of undecaprenyl diphosphate (UPP). Confers resistance to bacitracin. This is Undecaprenyl-diphosphatase from Pseudarthrobacter chlorophenolicus (strain ATCC 700700 / DSM 12829 / CIP 107037 / JCM 12360 / KCTC 9906 / NCIMB 13794 / A6) (Arthrobacter chlorophenolicus).